The sequence spans 284 residues: Bifunctional protein FolD (284 aa).

Residues 165 to 167 (GAS), S190, and I231 each bind NADP(+).

It belongs to the tetrahydrofolate dehydrogenase/cyclohydrolase family. Homodimer.

The enzyme catalyses (6R)-5,10-methylene-5,6,7,8-tetrahydrofolate + NADP(+) = (6R)-5,10-methenyltetrahydrofolate + NADPH. It carries out the reaction (6R)-5,10-methenyltetrahydrofolate + H2O = (6R)-10-formyltetrahydrofolate + H(+). It participates in one-carbon metabolism; tetrahydrofolate interconversion. Its function is as follows. Catalyzes the oxidation of 5,10-methylenetetrahydrofolate to 5,10-methenyltetrahydrofolate and then the hydrolysis of 5,10-methenyltetrahydrofolate to 10-formyltetrahydrofolate. In Polynucleobacter asymbioticus (strain DSM 18221 / CIP 109841 / QLW-P1DMWA-1) (Polynucleobacter necessarius subsp. asymbioticus), this protein is Bifunctional protein FolD.